Reading from the N-terminus, the 209-residue chain is dITP/XTP pyrophosphatase (209 aa).

Position 7–12 (7–12 (SSHGYK)) interacts with substrate. The active-site Proton acceptor is the D70. D70 contacts Mg(2+). Residues S71, 154–157 (FGYD), K177, and 182–183 (HR) each bind substrate.

Belongs to the HAM1 NTPase family. As to quaternary structure, homodimer. It depends on Mg(2+) as a cofactor.

The catalysed reaction is XTP + H2O = XMP + diphosphate + H(+). It carries out the reaction dITP + H2O = dIMP + diphosphate + H(+). The enzyme catalyses ITP + H2O = IMP + diphosphate + H(+). Pyrophosphatase that catalyzes the hydrolysis of nucleoside triphosphates to their monophosphate derivatives, with a high preference for the non-canonical purine nucleotides XTP (xanthosine triphosphate), dITP (deoxyinosine triphosphate) and ITP. Seems to function as a house-cleaning enzyme that removes non-canonical purine nucleotides from the nucleotide pool, thus preventing their incorporation into DNA/RNA and avoiding chromosomal lesions. This chain is dITP/XTP pyrophosphatase, found in Chlamydia trachomatis serovar A (strain ATCC VR-571B / DSM 19440 / HAR-13).